A 160-amino-acid polypeptide reads, in one-letter code: DNA polymerase delta subunit 4 (160 aa).

Residues 1–48 (MKKRTTQAKKSGQNTNIRDVFPHVVRSNSSQSHIGKKVSSEQSPTPDV) are disordered. Residues 8–17 (AKKSGQNTNI) are compositionally biased toward polar residues.

Belongs to the DNA polymerase delta subunit 4 family. In terms of assembly, heterotetramer that consist of the pol3, cdc1, cdc27 and cdm1 subunits. Interacts with cdc1 and pol3.

Its subcellular location is the nucleus. Functionally, appears to have a role in the stabilization of the DNA polymerase delta complex. This Schizosaccharomyces pombe (strain 972 / ATCC 24843) (Fission yeast) protein is DNA polymerase delta subunit 4 (cdm1).